A 425-amino-acid chain; its full sequence is Serine--tRNA ligase (425 aa).

231–233 provides a ligand contact to L-serine; that stretch reads TAE. 262–264 is a binding site for ATP; the sequence is RSE. E285 is an L-serine binding site. ATP is bound at residue 349–352; it reads EISS. S385 is an L-serine binding site.

Belongs to the class-II aminoacyl-tRNA synthetase family. Type-1 seryl-tRNA synthetase subfamily. As to quaternary structure, homodimer. The tRNA molecule binds across the dimer.

It localises to the cytoplasm. It carries out the reaction tRNA(Ser) + L-serine + ATP = L-seryl-tRNA(Ser) + AMP + diphosphate + H(+). The enzyme catalyses tRNA(Sec) + L-serine + ATP = L-seryl-tRNA(Sec) + AMP + diphosphate + H(+). The protein operates within aminoacyl-tRNA biosynthesis; selenocysteinyl-tRNA(Sec) biosynthesis; L-seryl-tRNA(Sec) from L-serine and tRNA(Sec): step 1/1. Its function is as follows. Catalyzes the attachment of serine to tRNA(Ser). Is also able to aminoacylate tRNA(Sec) with serine, to form the misacylated tRNA L-seryl-tRNA(Sec), which will be further converted into selenocysteinyl-tRNA(Sec). In Bartonella tribocorum (strain CIP 105476 / IBS 506), this protein is Serine--tRNA ligase.